Here is a 298-residue protein sequence, read N- to C-terminus: Ethanolamine ammonia-lyase small subunit (298 aa).

Adenosylcob(III)alamin contacts are provided by valine 210, glutamate 231, and cysteine 261.

It belongs to the EutC family. In terms of assembly, the basic unit is a heterodimer which dimerizes to form tetramers. The heterotetramers trimerize; 6 large subunits form a core ring with 6 small subunits projecting outwards. Adenosylcob(III)alamin serves as cofactor.

Its subcellular location is the bacterial microcompartment. It carries out the reaction ethanolamine = acetaldehyde + NH4(+). It participates in amine and polyamine degradation; ethanolamine degradation. Its function is as follows. Catalyzes the deamination of various vicinal amino-alcohols to oxo compounds. Allows this organism to utilize ethanolamine as the sole source of nitrogen and carbon in the presence of external vitamin B12. This is Ethanolamine ammonia-lyase small subunit from Salmonella agona (strain SL483).